A 125-amino-acid polypeptide reads, in one-letter code: Phosphoribosyl-AMP cyclohydrolase (125 aa).

Residue Asp-74 participates in Mg(2+) binding. Position 75 (Cys-75) interacts with Zn(2+). Residues Asp-76 and Asp-78 each contribute to the Mg(2+) site. Zn(2+) is bound by residues Cys-92 and Cys-99.

It belongs to the PRA-CH family. Homodimer. Mg(2+) is required as a cofactor. Requires Zn(2+) as cofactor.

The protein resides in the cytoplasm. The enzyme catalyses 1-(5-phospho-beta-D-ribosyl)-5'-AMP + H2O = 1-(5-phospho-beta-D-ribosyl)-5-[(5-phospho-beta-D-ribosylamino)methylideneamino]imidazole-4-carboxamide. The protein operates within amino-acid biosynthesis; L-histidine biosynthesis; L-histidine from 5-phospho-alpha-D-ribose 1-diphosphate: step 3/9. Its function is as follows. Catalyzes the hydrolysis of the adenine ring of phosphoribosyl-AMP. This Geobacter sulfurreducens (strain ATCC 51573 / DSM 12127 / PCA) protein is Phosphoribosyl-AMP cyclohydrolase.